The sequence spans 38 residues: Alpha-2-macroglobulin homolog (38 aa).

A cross-link (isoglutamyl cysteine thioester (Cys-Gln)) is located at residues 27–30 (CGEQ).

This sequence belongs to the protease inhibitor I39 (alpha-2-macroglobulin) family. Homodimer; disulfide-linked. Hemolymph.

Its subcellular location is the secreted. In terms of biological role, is able to inhibit all four classes of proteinases by a unique 'trapping' mechanism. This protein has a peptide stretch, called the 'bait region' which contains specific cleavage sites for different proteinases. When a proteinase cleaves the bait region, a conformational change is induced in the protein which traps the proteinase. The entrapped enzyme remains active against low molecular weight substrates (activity against high molecular weight substrates is greatly reduced). Following cleavage in the bait region a thioester bond is hydrolyzed and mediates the covalent binding of the protein to the proteinase. This is Alpha-2-macroglobulin homolog from Homarus americanus (American lobster).